Here is a 38-residue protein sequence, read N- to C-terminus: Large ribosomal subunit protein bL36 (38 aa).

Belongs to the bacterial ribosomal protein bL36 family.

This chain is Large ribosomal subunit protein bL36, found in Baumannia cicadellinicola subsp. Homalodisca coagulata.